Here is a 333-residue protein sequence, read N- to C-terminus: Dehydrodolichyl diphosphate synthase complex subunit Dhdds (333 aa).

The (2E,6E)-farnesyl diphosphate site is built by Asp-34, Gly-35, Arg-37, Arg-38, and Arg-85. Asp-34 lines the Mg(2+) pocket. 5 residues coordinate isopentenyl diphosphate: Arg-38, Arg-85, Arg-205, Arg-211, and Ser-213.

It belongs to the UPP synthase family. The active dehydrodolichyl diphosphate synthase complex is a heterotetramer composed of a dimer of heterodimer of DHDDS and NUS1. Interacts with NPC2. Requires Mg(2+) as cofactor.

The protein localises to the endoplasmic reticulum membrane. It catalyses the reaction n isopentenyl diphosphate + (2E,6E)-farnesyl diphosphate = a di-trans,poly-cis-polyprenyl diphosphate + n diphosphate. Its pathway is protein modification; protein glycosylation. It functions in the pathway lipid metabolism. In terms of biological role, with NUS1, forms the dehydrodolichyl diphosphate synthase (DDS) complex, an essential component of the dolichol monophosphate (Dol-P) biosynthetic machinery. Both subunits contribute to enzymatic activity, i.e. condensation of multiple copies of isopentenyl pyrophosphate (IPP) to farnesyl pyrophosphate (FPP) to produce dehydrodolichyl diphosphate (Dedol-PP), a precursor of dolichol phosphate which is utilized as a sugar carrier in protein glycosylation in the endoplasmic reticulum (ER). Synthesizes long-chain polyprenols, mostly of C95 and C100 chain length. Regulates the glycosylation and stability of nascent NPC2, thereby promoting trafficking of LDL-derived cholesterol. In Mus musculus (Mouse), this protein is Dehydrodolichyl diphosphate synthase complex subunit Dhdds.